The following is a 332-amino-acid chain: MSETNVQGSLAEAPKAAVKRVEQGVKLRGYDKVSRNPVKIIATDAVPRKPDWIRVRLSSSPSVEAIKQKLRKLNLHSVCEEASCPNLSECFSHGTATFMIMGDICTRRCPFCDVAHGRPNALDENEPTHLAQAIAEMNLKYVVITSVDRDDLRDGGAGHFAKCISESRKYSPNLKIEVLVPDFRGRMDVALDILRESPPDVFNHNLETVPRLYKQARPGADYAWSLLLLKRFKEAAPDVPTKSGLMLGIGEEIEEVKQVMRDLRAHNTDMLTLGQYLAPSKDHLPVVRFVHPDEFKELADYGYEIGFKQVASGPLVRSSYHADKQAAGETIS.

7 residues coordinate [4Fe-4S] cluster: Cys79, Cys84, Cys90, Cys105, Cys109, Cys112, and Ser319. Residues 91–308 enclose the Radical SAM core domain; the sequence is FSHGTATFMI…ADYGYEIGFK (218 aa).

Belongs to the radical SAM superfamily. Lipoyl synthase family. Requires [4Fe-4S] cluster as cofactor.

The protein localises to the cytoplasm. It carries out the reaction [[Fe-S] cluster scaffold protein carrying a second [4Fe-4S](2+) cluster] + N(6)-octanoyl-L-lysyl-[protein] + 2 oxidized [2Fe-2S]-[ferredoxin] + 2 S-adenosyl-L-methionine + 4 H(+) = [[Fe-S] cluster scaffold protein] + N(6)-[(R)-dihydrolipoyl]-L-lysyl-[protein] + 4 Fe(3+) + 2 hydrogen sulfide + 2 5'-deoxyadenosine + 2 L-methionine + 2 reduced [2Fe-2S]-[ferredoxin]. The protein operates within protein modification; protein lipoylation via endogenous pathway; protein N(6)-(lipoyl)lysine from octanoyl-[acyl-carrier-protein]: step 2/2. In terms of biological role, catalyzes the radical-mediated insertion of two sulfur atoms into the C-6 and C-8 positions of the octanoyl moiety bound to the lipoyl domains of lipoate-dependent enzymes, thereby converting the octanoylated domains into lipoylated derivatives. The polypeptide is Lipoyl synthase (Hahella chejuensis (strain KCTC 2396)).